We begin with the raw amino-acid sequence, 580 residues long: 2-hydroxyacyl-CoA lyase 1 (580 aa).

Residue Glu47 participates in thiamine diphosphate binding. Residues 413–494 form a thiamine pyrophosphate binding region; sequence TMDIGRLCIP…FIVLNNNGVY (82 aa). Positions 463 and 490 each coordinate Mg(2+).

Belongs to the TPP enzyme family. Homotetramer. Mg(2+) serves as cofactor. It depends on thiamine diphosphate as a cofactor.

It is found in the peroxisome. The catalysed reaction is a 2-hydroxy-3-methyl fatty acyl-CoA = a 2-methyl-branched fatty aldehyde + formyl-CoA. It carries out the reaction an (R)-2-hydroxy-long-chain-fatty acyl-CoA = a long-chain fatty aldehyde + formyl-CoA. It catalyses the reaction 2-hydroxy-3-methylhexadecanoyl-CoA = 2-methylpentadecanal + formyl-CoA. The enzyme catalyses 2-hydroxyoctadecanoyl-CoA = heptadecanal + formyl-CoA. In terms of biological role, peroxisomal 2-OH acyl-CoA lyase involved in the cleavage (C1 removal) reaction in the fatty acid alpha-oxydation in a thiamine pyrophosphate (TPP)-dependent manner. Involved in the degradation of 3-methyl-branched fatty acids and the shortening of 2-hydroxy long-chain fatty acids. The protein is 2-hydroxyacyl-CoA lyase 1 (hacl1) of Dictyostelium discoideum (Social amoeba).